The following is a 316-amino-acid chain: uncharacterized protein (316 aa).

This is an uncharacterized protein from Caenorhabditis elegans.